Consider the following 186-residue polypeptide: Elongation factor P (186 aa).

Belongs to the elongation factor P family.

The protein resides in the cytoplasm. It participates in protein biosynthesis; polypeptide chain elongation. In terms of biological role, involved in peptide bond synthesis. Stimulates efficient translation and peptide-bond synthesis on native or reconstituted 70S ribosomes in vitro. Probably functions indirectly by altering the affinity of the ribosome for aminoacyl-tRNA, thus increasing their reactivity as acceptors for peptidyl transferase. The polypeptide is Elongation factor P (Cupriavidus pinatubonensis (strain JMP 134 / LMG 1197) (Cupriavidus necator (strain JMP 134))).